A 489-amino-acid chain; its full sequence is MSVYGLQRLYIAGAHADATSGKTFDTFDPATGELLARVQQASADDVDRAVASAREGQREWAAMTAMQRSRILRRAVELLRERNNALAELEMRDTGKPIAETRAVDIVTGADVIEYYAGLATAIEGLQVPLRPESFVYTRREPLGVCAGIGAWNYPIQIACWKSAPALAAGNAMIFKPSEVTPLSALKLAEIYTEAGVPAGVFNVVQGDGSVGALLSAHPGIAKVSFTGGVETGKKVMSLAGASSLKEVTMELGGKSPLIVFDDADLDRAADIAVTANFFSAGQVCTNGTRVFVQQAVKDAFVERVLARVARIRAGKPSDPDTNFGPLASAAQLDKVLGYIDSGKAEGAKLLAGGARLVNDHFASGQYVAPTVFGDCRDDMRIVREEIFGPVMSILSFETEDEAIARANATDYGLAAGVVTENLSRAHRAIHRLEAGICWINTWGESPAEMPVGGYKQSGVGRENGITTLEHYTRIKSVQVELGRYQPVF.

K(+) contacts are provided by Thr26 and Asp93. 150-152 (GAW) is a binding site for NAD(+). Lys162 acts as the Charge relay system in catalysis. 176 to 179 (KPSE) contacts NAD(+). K(+) is bound at residue Val180. Residue 229 to 232 (GVET) coordinates NAD(+). Leu245 serves as a coordination point for K(+). Glu251 (proton acceptor) is an active-site residue. The NAD(+) site is built by Gly253, Cys285, and Glu386. Cys285 acts as the Nucleophile in catalysis. Position 285 is a cysteine sulfenic acid (-SOH) (Cys285). 2 residues coordinate K(+): Lys456 and Gly459. The active-site Charge relay system is the Glu463.

Belongs to the aldehyde dehydrogenase family. In terms of assembly, dimer of dimers. Requires K(+) as cofactor.

It catalyses the reaction betaine aldehyde + NAD(+) + H2O = glycine betaine + NADH + 2 H(+). It participates in amine and polyamine biosynthesis; betaine biosynthesis via choline pathway; betaine from betaine aldehyde: step 1/1. Functionally, involved in the biosynthesis of the osmoprotectant glycine betaine. Catalyzes the irreversible oxidation of betaine aldehyde to the corresponding acid. The protein is Betaine aldehyde dehydrogenase of Burkholderia pseudomallei (strain 668).